A 507-amino-acid polypeptide reads, in one-letter code: Cyclin-dependent kinase-like 2 (507 aa).

In terms of domain architecture, Protein kinase spans 4-289; the sequence is YENLGLVGEG…CADLLHHDFF (286 aa). Residues 10-18 and Lys33 each bind ATP; that span reads VGEGSYGMV. A [NKR]KIAxRE motif is present at residues 45–51; the sequence is KKIAMRE. Catalysis depends on Asp126, which acts as the Proton acceptor. The disordered stretch occupies residues 365–392; sequence KTEKGTRASNGSCLHDNGTSHKGLSSTS.

Belongs to the protein kinase superfamily. CMGC Ser/Thr protein kinase family. CDC2/CDKX subfamily.

It is found in the cytoplasm. Its subcellular location is the nucleus. The catalysed reaction is L-seryl-[protein] + ATP = O-phospho-L-seryl-[protein] + ADP + H(+). It carries out the reaction L-threonyl-[protein] + ATP = O-phospho-L-threonyl-[protein] + ADP + H(+). The protein is Cyclin-dependent kinase-like 2 of Rattus norvegicus (Rat).